Reading from the N-terminus, the 198-residue chain is Putative 3-methyladenine DNA glycosylase (198 aa).

This sequence belongs to the DNA glycosylase MPG family.

The polypeptide is Putative 3-methyladenine DNA glycosylase (Rhizobium johnstonii (strain DSM 114642 / LMG 32736 / 3841) (Rhizobium leguminosarum bv. viciae)).